A 122-amino-acid chain; its full sequence is Large ribosomal subunit protein uL18 (122 aa).

This sequence belongs to the universal ribosomal protein uL18 family. Part of the 50S ribosomal subunit; part of the 5S rRNA/L5/L18/L25 subcomplex. Contacts the 5S and 23S rRNAs.

Functionally, this is one of the proteins that bind and probably mediate the attachment of the 5S RNA into the large ribosomal subunit, where it forms part of the central protuberance. In Prochlorococcus marinus (strain AS9601), this protein is Large ribosomal subunit protein uL18.